We begin with the raw amino-acid sequence, 101 residues long: Small ubiquitin-related modifier 5 (101 aa).

Positions 17–21 (IKDED) match the Required for PML-NB formation motif. Residue lysine 18 forms a Glycyl lysine isopeptide (Lys-Gly) (interchain with G-Cter in SUMO1P1/SUMO5) linkage. Residues 20–97 (EDIKLRVIGQ…IEVYQEQIGG (78 aa)) enclose the Ubiquitin-like domain. Residue glycine 97 forms a Glycyl lysine isopeptide (Gly-Lys) (interchain with K-? in acceptor proteins) linkage. A propeptide spanning residues 98 to 101 (HSTV) is cleaved from the precursor.

It belongs to the ubiquitin family. SUMO subfamily. In terms of assembly, interacts with CBX4. Interacts with PIAS1. Found in a complex with SAE2. Interacts with UBE2I. Interacts with SP100. Interacts with HIPK2. Interacts with DAXX. Interacts with PML-RARA oncoprotein; PML-RARalpha outcompetes PML for SUMO1P1/SUMO5 conjugation. In terms of processing, cleavage of precursor form is necessary for function. Post-translationally, autosumoylated at Lys-18. In terms of tissue distribution, high expression levels in testes and peripheral blood leukocyte. Expressed also in lung, placenta, liver, spleen and thymus.

The protein localises to the nucleus. Its function is as follows. Ubiquitin-like protein that can be covalently attached to proteins as a monomer or as a lysine-linked polymer. Regulates the life cycle of promyelocytic leukemia nuclear bodies (PML-NBs). PolySUMO1P1/SUMO5 conjugation on 'Lys-160' of PML facilitates recruitment of PML-NB components, which enlarges PML-NB. SUMO1P1/SUMO5 also increases polySUMO2/3 conjugation of PML, resulting in RNF4-mediated disruption of PML-NBs. This Homo sapiens (Human) protein is Small ubiquitin-related modifier 5.